A 311-amino-acid chain; its full sequence is tRNA dimethylallyltransferase (311 aa).

An ATP-binding site is contributed by 10 to 17; the sequence is GPTASGKT. Residue 12-17 participates in substrate binding; the sequence is TASGKT. Interaction with substrate tRNA stretches follow at residues 35 to 38, 159 to 163, and 240 to 245; these read DSAL, QRINR, and RCVGYR.

Belongs to the IPP transferase family. In terms of assembly, monomer. Mg(2+) is required as a cofactor.

The enzyme catalyses adenosine(37) in tRNA + dimethylallyl diphosphate = N(6)-dimethylallyladenosine(37) in tRNA + diphosphate. In terms of biological role, catalyzes the transfer of a dimethylallyl group onto the adenine at position 37 in tRNAs that read codons beginning with uridine, leading to the formation of N6-(dimethylallyl)adenosine (i(6)A). This chain is tRNA dimethylallyltransferase, found in Haemophilus influenzae (strain 86-028NP).